Consider the following 255-residue polypeptide: Diphthine synthase (255 aa).

S-adenosyl-L-methionine contacts are provided by residues Leu9, Asp85, Val88, 113–114 (SI), Leu164, Ala207, and His232.

The protein belongs to the diphthine synthase family. Homodimer.

It catalyses the reaction 2-[(3S)-amino-3-carboxypropyl]-L-histidyl-[translation elongation factor 2] + 3 S-adenosyl-L-methionine = diphthine-[translation elongation factor 2] + 3 S-adenosyl-L-homocysteine + 3 H(+). Its pathway is protein modification; peptidyl-diphthamide biosynthesis. Functionally, S-adenosyl-L-methionine-dependent methyltransferase that catalyzes the trimethylation of the amino group of the modified target histidine residue in translation elongation factor 2 (EF-2), to form an intermediate called diphthine. The three successive methylation reactions represent the second step of diphthamide biosynthesis. The chain is Diphthine synthase from Methanococcus maripaludis (strain C6 / ATCC BAA-1332).